Reading from the N-terminus, the 455-residue chain is Epoxide hydrolase 1 (455 aa).

The chain crosses the membrane as a helical; Signal-anchor for type III membrane protein span at residues 1 to 21; it reads MLLELLLASVLGFVIYWFVSG. Topologically, residues 22–455 are cytoplasmic; that stretch reads DKEESLPLED…CKFVGLVERQ (434 aa). The active-site Nucleophile is the D226. Position 295 is a dimethylated arginine (R295). Y374 serves as the catalytic Proton donor. Residue H431 is the Proton acceptor of the active site.

Belongs to the peptidase S33 family.

The protein localises to the microsome membrane. The protein resides in the endoplasmic reticulum membrane. It catalyses the reaction cis-stilbene oxide + H2O = (1R,2R)-hydrobenzoin. It carries out the reaction 1-(4-methoxyphenyl)-N-methyl-N-[(3-methyloxetan-3-yl)methyl]methanamine + H2O = 2-{[(4-methoxybenzyl)(methyl)amino]methyl}-2-methylpropane-1,3-diol. The catalysed reaction is 8,9-epoxy-(5Z,11Z,14Z)-eicosatrienoate + H2O = 8,9-dihydroxy-(5Z,11Z,14Z)-eicosatrienoate. The enzyme catalyses 11,12-epoxy-(5Z,8Z,14Z)-eicosatrienoate + H2O = 11,12-dihydroxy-(5Z,8Z,14Z)-eicosatrienoate. It catalyses the reaction 2-(5Z,8Z,11Z,14Z-eicosatetraenoyl)-glycerol + H2O = glycerol + (5Z,8Z,11Z,14Z)-eicosatetraenoate + H(+). Its activity is regulated as follows. Inhibited by 10-hydroxystearamide and methoxy-arachidonyl fluorophosphate. Functionally, biotransformation enzyme that catalyzes the hydrolysis of arene and aliphatic epoxides to less reactive and more water soluble dihydrodiols by the trans addition of water. May play a role in the metabolism of endogenous lipids such as epoxide-containing fatty acids. Metabolizes the abundant endocannabinoid 2-arachidonoylglycerol (2-AG) to free arachidonic acid (AA) and glycerol. Binds 20(S)-hydroxycholesterol (20(S)-OHC). The polypeptide is Epoxide hydrolase 1 (EPHX1) (Oryctolagus cuniculus (Rabbit)).